The following is a 154-amino-acid chain: Nascent polypeptide-associated complex subunit beta (154 aa).

The 66-residue stretch at 33 to 98 folds into the NAC-A/B domain; that stretch reads EQDDTKLIEA…PQEKNVTQLI (66 aa). The segment at 125 to 154 is disordered; that stretch reads APTELNAGAPAGGDEGIPDLIDGEKFDEVE.

This sequence belongs to the NAC-beta family. In terms of assembly, part of the nascent polypeptide-associated complex (NAC), consisting of EGD2 and EGD1. NAC associates with ribosomes via EGD1.

It is found in the cytoplasm. The protein localises to the nucleus. In terms of biological role, component of the nascent polypeptide-associated complex (NAC), a dynamic component of the ribosomal exit tunnel, protecting the emerging polypeptides from interaction with other cytoplasmic proteins to ensure appropriate nascent protein targeting. The NAC complex also promotes mitochondrial protein import by enhancing productive ribosome interactions with the outer mitochondrial membrane and blocks the inappropriate interaction of ribosomes translating non-secretory nascent polypeptides with translocation sites in the membrane of the endoplasmic reticulum. EGD1 may act as a transcription factor that exert a negative effect on the expression of several genes that are transcribed by RNA polymerase II. The sequence is that of Nascent polypeptide-associated complex subunit beta (EGD1) from Scheffersomyces stipitis (strain ATCC 58785 / CBS 6054 / NBRC 10063 / NRRL Y-11545) (Yeast).